Reading from the N-terminus, the 311-residue chain is tRNA dimethylallyltransferase (311 aa).

13-20 (GPTASGKT) provides a ligand contact to ATP. Substrate is bound at residue 15-20 (TASGKT). Interaction with substrate tRNA stretches follow at residues 38 to 41 (DSMQ) and 166 to 170 (QRVLR).

It belongs to the IPP transferase family. In terms of assembly, monomer. Mg(2+) is required as a cofactor.

The enzyme catalyses adenosine(37) in tRNA + dimethylallyl diphosphate = N(6)-dimethylallyladenosine(37) in tRNA + diphosphate. Its function is as follows. Catalyzes the transfer of a dimethylallyl group onto the adenine at position 37 in tRNAs that read codons beginning with uridine, leading to the formation of N6-(dimethylallyl)adenosine (i(6)A). The sequence is that of tRNA dimethylallyltransferase from Staphylococcus aureus (strain bovine RF122 / ET3-1).